The following is a 164-amino-acid chain: UPF0304 protein YfbU (164 aa).

The protein belongs to the UPF0304 family.

This Shigella flexneri protein is UPF0304 protein YfbU.